We begin with the raw amino-acid sequence, 483 residues long: tRNA sulfurtransferase (483 aa).

In terms of domain architecture, THUMP spans 61 to 165 (AEVLEILTTT…DELLNQVIAR (105 aa)). ATP-binding positions include 183–184 (LI), Lys265, Gly287, and Gln296. Cys344 and Cys457 are oxidised to a cystine. The 79-residue stretch at 405-483 (EEGNAVVLDI…GFNNVKVYRP (79 aa)) folds into the Rhodanese domain. The Cysteine persulfide intermediate role is filled by Cys457.

Belongs to the ThiI family.

The protein localises to the cytoplasm. The enzyme catalyses [ThiI sulfur-carrier protein]-S-sulfanyl-L-cysteine + a uridine in tRNA + 2 reduced [2Fe-2S]-[ferredoxin] + ATP + H(+) = [ThiI sulfur-carrier protein]-L-cysteine + a 4-thiouridine in tRNA + 2 oxidized [2Fe-2S]-[ferredoxin] + AMP + diphosphate. It carries out the reaction [ThiS sulfur-carrier protein]-C-terminal Gly-Gly-AMP + S-sulfanyl-L-cysteinyl-[cysteine desulfurase] + AH2 = [ThiS sulfur-carrier protein]-C-terminal-Gly-aminoethanethioate + L-cysteinyl-[cysteine desulfurase] + A + AMP + 2 H(+). It functions in the pathway cofactor biosynthesis; thiamine diphosphate biosynthesis. Functionally, catalyzes the ATP-dependent transfer of a sulfur to tRNA to produce 4-thiouridine in position 8 of tRNAs, which functions as a near-UV photosensor. Also catalyzes the transfer of sulfur to the sulfur carrier protein ThiS, forming ThiS-thiocarboxylate. This is a step in the synthesis of thiazole, in the thiamine biosynthesis pathway. The sulfur is donated as persulfide by IscS. The polypeptide is tRNA sulfurtransferase (Vibrio cholerae serotype O1 (strain ATCC 39315 / El Tor Inaba N16961)).